A 1309-amino-acid polypeptide reads, in one-letter code: Putative receptor-type tyrosine-protein phosphatase mosPTP-1 (1309 aa).

A signal peptide spans 1 to 36 (MNSAPRNAGAARSVDRRGFIAACGLLVLLVVRMLGA). Residues 37-572 (ADATRIFDIE…RQVYDDYNLA (536 aa)) are Extracellular-facing. Asn60, Asn107, Asn162, Asn257, Asn353, Asn389, Asn455, Asn501, and Asn513 each carry an N-linked (GlcNAc...) asparagine glycan. Fibronectin type-III domains follow at residues 147–244 (PPGR…TLRE), 249–347 (KPVT…DEGV), 350–449 (KPLN…SGPS), and 450–553 (APKV…LQLH). Residues 573-593 (VLGGIVFSCFGLLLIVLSFLL) form a helical membrane-spanning segment. Over 594-1309 (WKKCFHAAYY…NHLNLDHNQS (716 aa)) the chain is Cytoplasmic. 2 Tyrosine-protein phosphatase domains span residues 656–921 (FSKE…LVEA) and 944–1196 (IDNQ…LSYM). Residue Cys862 is the Phosphocysteine intermediate of the active site. The segment at 1239 to 1269 (NSGDGGGNGNDGVPTGNGTNGGLPMSGGGTT) is disordered. The span at 1256 to 1268 (GTNGGLPMSGGGT) shows a compositional bias: gly residues.

The protein belongs to the protein-tyrosine phosphatase family. Receptor class subfamily. Interacts with C-type lectin mosGCTL-1; the interaction probably mediates the recruitment of West Nile virus particles in complex with C-type lectin mosGCTL-1 to the cell surface. Interacts with C-type lectin mosGCTL-7; the interaction probably mediates the recruitment of Japanese encephalitis virus particles in complex with C-type lectin mosGCTL-7 to the cell surface. Salivary gland (at protein level). Hemolymph. Low-level expression in midgut.

The protein resides in the cell membrane. The enzyme catalyses O-phospho-L-tyrosyl-[protein] + H2O = L-tyrosyl-[protein] + phosphate. Functionally, putative protein tyrosine-protein phosphatase. In terms of biological role, (Microbial infection) Facilitates West Nile virus infection in mosquitoes probably via recruiting West Nile virus particles in complex with C-type lectin mosGCTL-1 to the cell surface. Its function is as follows. (Microbial infection) Facilitates Japanese encephalitis virus infection in mosquitoes probably via recruiting Japanese encephalitis virus particles in complex with C-type lectin mosGCTL-7 to the cell surface. This Aedes aegypti (Yellowfever mosquito) protein is Putative receptor-type tyrosine-protein phosphatase mosPTP-1.